The chain runs to 786 residues: Spermatogenesis-associated protein 20 (786 aa).

An N-terminal signal peptide occupies residues 1-22; the sequence is MLGARAWLGRVLLLPRAGAGLA. The interval 23-61 is disordered; it reads ASRRGSSSRDKDRSATVSSSVPMPAGGKGSHPSSTPQRV. Ser649 carries the phosphoserine modification.

It localises to the secreted. May play a role in fertility regulation. In Homo sapiens (Human), this protein is Spermatogenesis-associated protein 20 (SPATA20).